The sequence spans 103 residues: Integration host factor subunit beta (103 aa).

The interval Arg-62–Lys-81 is disordered.

Belongs to the bacterial histone-like protein family. In terms of assembly, heterodimer of an alpha and a beta chain.

Functionally, this protein is one of the two subunits of integration host factor, a specific DNA-binding protein that functions in genetic recombination as well as in transcriptional and translational control. This Xanthomonas campestris pv. campestris (strain B100) protein is Integration host factor subunit beta.